A 436-amino-acid chain; its full sequence is Ribosomal protein uS12 methylthiotransferase RimO (436 aa).

An MTTase N-terminal domain is found at Pro2–Asn114. The [4Fe-4S] cluster site is built by Cys11, Cys45, Cys77, Cys146, Cys150, and Cys153. The region spanning Thr132–Lys363 is the Radical SAM core domain. Residues Lys363–Cys434 enclose the TRAM domain.

The protein belongs to the methylthiotransferase family. RimO subfamily. [4Fe-4S] cluster is required as a cofactor.

Its subcellular location is the cytoplasm. It catalyses the reaction L-aspartate(89)-[ribosomal protein uS12]-hydrogen + (sulfur carrier)-SH + AH2 + 2 S-adenosyl-L-methionine = 3-methylsulfanyl-L-aspartate(89)-[ribosomal protein uS12]-hydrogen + (sulfur carrier)-H + 5'-deoxyadenosine + L-methionine + A + S-adenosyl-L-homocysteine + 2 H(+). In terms of biological role, catalyzes the methylthiolation of an aspartic acid residue of ribosomal protein uS12. This is Ribosomal protein uS12 methylthiotransferase RimO from Campylobacter fetus subsp. fetus (strain 82-40).